The chain runs to 170 residues: Acetyl-CoA decarbonylase/synthase complex subunit epsilon 1 (170 aa).

Belongs to the CdhB family. As to quaternary structure, heterotetramer of two alpha and two epsilon subunits. The ACDS complex is made up of alpha, epsilon, beta, gamma and delta subunits with a probable stoichiometry of (alpha(2)epsilon(2))(4)-beta(8)-(gamma(1)delta(1))(8).

It functions in the pathway one-carbon metabolism; methanogenesis from acetate. Its function is as follows. Part of a complex that catalyzes the reversible cleavage of acetyl-CoA, allowing growth on acetate as sole source of carbon and energy. The alpha-epsilon subcomponent functions as a carbon monoxide dehydrogenase. The precise role of the epsilon subunit is unclear; it may have a stabilizing role within the alpha(2)epsilon(2) component and/or be involved in electron transfer to FAD during a potential FAD-mediated CO oxidation. The sequence is that of Acetyl-CoA decarbonylase/synthase complex subunit epsilon 1 (cdhB1) from Methanosarcina mazei (strain ATCC BAA-159 / DSM 3647 / Goe1 / Go1 / JCM 11833 / OCM 88) (Methanosarcina frisia).